The primary structure comprises 277 residues: Ras suppressor protein 1 (277 aa).

The interval 1–23 (MSKSLKKLVEESREKNQPEVDMS) is disordered. Serine 2 is modified (N-acetylserine). Residues 7–23 (KLVEESREKNQPEVDMS) show a composition bias toward basic and acidic residues. LRR repeat units lie at residues 41 to 63 (HITQ…AELK), 64 to 85 (NLEV…ISSL), 87 to 108 (KLKH…FGSS), 110 to 133 (LLEV…FFYL), 135 to 156 (TLRA…IGKL), 158 to 179 (KLQI…IGEL), and 181 to 202 (QLKE…LGNL). The tract at residues 250-277 (MQANPEPPKKNNDKSKKISRKPLAAKNK) is disordered. Residues 256–265 (PPKKNNDKSK) are compositionally biased toward basic and acidic residues.

In terms of biological role, potentially plays a role in the Ras signal transduction pathway. Capable of suppressing v-Ras transformation in vitro. In Mus musculus (Mouse), this protein is Ras suppressor protein 1 (Rsu1).